We begin with the raw amino-acid sequence, 166 residues long: UPF0179 protein Tneu_1978 (166 aa).

Residues 140-166 form a disordered region; the sequence is PPSPSKSGGATASRDPSRAPPSRPLSK. Pro residues predominate over residues 157 to 166; sequence RAPPSRPLSK.

The protein belongs to the UPF0179 family.

This Pyrobaculum neutrophilum (strain DSM 2338 / JCM 9278 / NBRC 100436 / V24Sta) (Thermoproteus neutrophilus) protein is UPF0179 protein Tneu_1978.